The following is a 156-amino-acid chain: Cyanate hydratase (156 aa).

Active-site residues include R96, E99, and S122.

The protein belongs to the cyanase family.

It catalyses the reaction cyanate + hydrogencarbonate + 3 H(+) = NH4(+) + 2 CO2. In terms of biological role, catalyzes the reaction of cyanate with bicarbonate to produce ammonia and carbon dioxide. The chain is Cyanate hydratase from Burkholderia mallei (strain NCTC 10247).